We begin with the raw amino-acid sequence, 200 residues long: MSFTGTQQKCRACEKTVYPVELLSADGISYHKACFKCSHCKSRLQLSNYSSMEGVVYCRPHFEQLFKESGSFSKNFQSPAKPLTDKPTPELNRTPSRLAGMFSGTQDKCATCTKTVYPIEKVTVESQCYHKSCFKCSHGGCPISPSNYAALEGILYCKHHFAQLFKEKGSYNHLIKSASIKRATAAATAAAAAVAAVPES.

LIM zinc-binding domains follow at residues 8 to 68 and 107 to 167; these read QKCR…LFKE and DKCA…LFKE.

In terms of assembly, interacts with F-actin. As to expression, expressed in roots, leaves, stems, flowers and siliques. Barely detected in pollen.

The protein resides in the cytoplasm. It is found in the cytoskeleton. Binds to actin filaments and promotes cross-linking into thick bundles. Has an actin-stabilizing activity. The actin regulatory activities are not regulated by pH and [Ca(2+)]. This Arabidopsis thaliana (Mouse-ear cress) protein is LIM domain-containing protein WLIM2a.